Reading from the N-terminus, the 590-residue chain is Aspartate--tRNA(Asp/Asn) ligase (590 aa).

Position 182 (E182) interacts with L-aspartate. The tract at residues 206-209 (QLFK) is aspartate. Residue R228 participates in L-aspartate binding. ATP-binding positions include 228 to 230 (RDE) and Q237. An L-aspartate-binding site is contributed by H454. E488 serves as a coordination point for ATP. L-aspartate is bound at residue R495. Residue 540 to 543 (GLDR) participates in ATP binding.

It belongs to the class-II aminoacyl-tRNA synthetase family. Type 1 subfamily. As to quaternary structure, homodimer.

Its subcellular location is the cytoplasm. It catalyses the reaction tRNA(Asx) + L-aspartate + ATP = L-aspartyl-tRNA(Asx) + AMP + diphosphate. In terms of biological role, aspartyl-tRNA synthetase with relaxed tRNA specificity since it is able to aspartylate not only its cognate tRNA(Asp) but also tRNA(Asn). Reaction proceeds in two steps: L-aspartate is first activated by ATP to form Asp-AMP and then transferred to the acceptor end of tRNA(Asp/Asn). The polypeptide is Aspartate--tRNA(Asp/Asn) ligase (Halothermothrix orenii (strain H 168 / OCM 544 / DSM 9562)).